Consider the following 630-residue polypeptide: Molybdenum cofactor biosynthesis protein 1 (630 aa).

Residues 61-298 (RFNRHHTYLR…SKTYHVPGFK (238 aa)) enclose the Radical SAM core domain. Arg70 contacts GTP. Residues Cys77 and Cys81 each coordinate [4Fe-4S] cluster. Tyr83 contacts S-adenosyl-L-methionine. Cys84 is a [4Fe-4S] cluster binding site. Arg120 serves as a coordination point for GTP. Position 124 (Gly124) interacts with S-adenosyl-L-methionine. Thr151 contacts GTP. Ser175 contributes to the S-adenosyl-L-methionine binding site. Lys212 contributes to the GTP binding site. Met246 contacts S-adenosyl-L-methionine. Residues Cys312 and Cys315 each coordinate [4Fe-4S] cluster. Position 317–319 (317–319 (RLR)) interacts with GTP. A [4Fe-4S] cluster-binding site is contributed by Cys329. The interval 402–629 (KEVKNYLLKL…GGKSSSPQIT (228 aa)) is molybdenum cofactor biosynthesis protein C. Asp599 (for molybdenum cofactor biosynthesis protein C activity) is an active-site residue.

The protein in the C-terminal section; belongs to the MoaC family. In the N-terminal section; belongs to the radical SAM superfamily. MoaA family. Isoform mocs1a and isoform mocs1b probably form a heterooligomer. [4Fe-4S] cluster is required as a cofactor.

It catalyses the reaction GTP + AH2 + S-adenosyl-L-methionine = (8S)-3',8-cyclo-7,8-dihydroguanosine 5'-triphosphate + 5'-deoxyadenosine + L-methionine + A + H(+). It carries out the reaction (8S)-3',8-cyclo-7,8-dihydroguanosine 5'-triphosphate = cyclic pyranopterin phosphate + diphosphate. The protein operates within cofactor biosynthesis; molybdopterin biosynthesis. Functionally, isoform mocs1a and isoform mocs1b probably form a complex that catalyzes the conversion of 5'-GTP to cyclic pyranopterin monophosphate (cPMP). mocs1a catalyzes the cyclization of GTP to (8S)-3',8-cyclo-7,8-dihydroguanosine 5'-triphosphate and mocs1b catalyzes the subsequent conversion of (8S)-3',8-cyclo-7,8-dihydroguanosine 5'-triphosphate to cPMP. The sequence is that of Molybdenum cofactor biosynthesis protein 1 (mocs1) from Dictyostelium discoideum (Social amoeba).